Here is a 159-residue protein sequence, read N- to C-terminus: Ribosomal RNA large subunit methyltransferase H (159 aa).

S-adenosyl-L-methionine contacts are provided by Leu76 and Gly108.

The protein belongs to the RNA methyltransferase RlmH family. As to quaternary structure, homodimer.

It is found in the cytoplasm. The enzyme catalyses pseudouridine(1915) in 23S rRNA + S-adenosyl-L-methionine = N(3)-methylpseudouridine(1915) in 23S rRNA + S-adenosyl-L-homocysteine + H(+). In terms of biological role, specifically methylates the pseudouridine at position 1915 (m3Psi1915) in 23S rRNA. The chain is Ribosomal RNA large subunit methyltransferase H from Limosilactobacillus reuteri (strain DSM 20016) (Lactobacillus reuteri).